A 208-amino-acid polypeptide reads, in one-letter code: Recombination protein RecR (208 aa).

The C4-type zinc-finger motif lies at 57–72 (CALCNTLTEQEVCVTC). The Toprim domain maps to 80–187 (SKLCVVETPA…QVTRLARGVP (108 aa)).

The protein belongs to the RecR family.

May play a role in DNA repair. It seems to be involved in an RecBC-independent recombinational process of DNA repair. It may act with RecF and RecO. The chain is Recombination protein RecR from Polaromonas naphthalenivorans (strain CJ2).